The chain runs to 187 residues: dCTP deaminase, dUMP-forming (187 aa).

DCTP-binding positions include 99–104, aspartate 117, 125–127, glutamine 146, tyrosine 159, lysine 166, and glutamine 170; these read KSSIAR and TLE. The active-site Proton donor/acceptor is the glutamate 127.

The protein belongs to the dCTP deaminase family. In terms of assembly, homotrimer.

It catalyses the reaction dCTP + 2 H2O = dUMP + NH4(+) + diphosphate. The protein operates within pyrimidine metabolism; dUMP biosynthesis; dUMP from dCTP: step 1/1. In terms of biological role, bifunctional enzyme that catalyzes both the deamination of dCTP to dUTP and the hydrolysis of dUTP to dUMP without releasing the toxic dUTP intermediate. The chain is dCTP deaminase, dUMP-forming from Methanoculleus marisnigri (strain ATCC 35101 / DSM 1498 / JR1).